The following is a 163-amino-acid chain: uncharacterized protein (163 aa).

The helical transmembrane segment at 7-23 (TLVAFIATFFNLAATSI) threads the bilayer.

The protein localises to the membrane. This is an uncharacterized protein from Saccharomyces cerevisiae (strain ATCC 204508 / S288c) (Baker's yeast).